Consider the following 331-residue polypeptide: Decarboxylase orsB (331 aa).

The Zn(2+) site is built by His11, His157, and Asp284.

Belongs to the metallo-dependent hydrolases superfamily. ACMSD family.

It participates in secondary metabolite biosynthesis. Its function is as follows. Decarboxylase; part of the gene cluster that mediates the biosynthesis of orsellinic acid, as well as of the cathepsin K inhibitors F9775 A and F9775 B. The non-reducing polyketide synthase orsA produces orsellinic acid by condensing acetyl-CoA with 3 malonyl-CoA units. Further modifications by the decarboxylase orsB and the tyrosinase-like protein orsC lead to the production of F9775 A and F9775 B. The functions of orsD and orsE remain unclear since only orsB and orsC are required to convert orsellinic acid into F9775 A and F9775 B. The chain is Decarboxylase orsB from Emericella nidulans (strain FGSC A4 / ATCC 38163 / CBS 112.46 / NRRL 194 / M139) (Aspergillus nidulans).